Consider the following 149-residue polypeptide: 3-hydroxyacyl-[acyl-carrier-protein] dehydratase FabZ (149 aa).

Residue histidine 49 is part of the active site.

It belongs to the thioester dehydratase family. FabZ subfamily.

It is found in the cytoplasm. The enzyme catalyses a (3R)-hydroxyacyl-[ACP] = a (2E)-enoyl-[ACP] + H2O. In terms of biological role, involved in unsaturated fatty acids biosynthesis. Catalyzes the dehydration of short chain beta-hydroxyacyl-ACPs and long chain saturated and unsaturated beta-hydroxyacyl-ACPs. This chain is 3-hydroxyacyl-[acyl-carrier-protein] dehydratase FabZ, found in Sulfurovum sp. (strain NBC37-1).